A 348-amino-acid polypeptide reads, in one-letter code: Rhodopsin (348 aa).

Methionine 1 carries the N-acetylmethionine modification. At 1-36 (MNGTEGPDFYIPMSNQTGVVRSPFEYPQYYLAEPWQ) the chain is on the extracellular side. Asparagine 2 and asparagine 15 each carry an N-linked (GlcNAc...) asparagine glycan. Residues 37–61 (FSMLAAYMFLLIVLGFPINFLTLYV) form a helical membrane-spanning segment. The Cytoplasmic portion of the chain corresponds to 62–73 (TVQHKKLRTPLN). A helical transmembrane segment spans residues 74-96 (YILLNLAVADLFMVLGGFTTTLY). Topologically, residues 97–110 (TSLHGYFVFGPTGC) are extracellular. A disulfide bridge connects residues cysteine 110 and cysteine 187. Residues 111 to 133 (NVEGFFATLGGEIALWSLVVLAI) traverse the membrane as a helical segment. A 'Ionic lock' involved in activated form stabilization motif is present at residues 134 to 136 (ERY). At 134–152 (ERYVVVCKPMSNFRFGENH) the chain is on the cytoplasmic side. A helical membrane pass occupies residues 153 to 173 (AIMGVAFTWIMALACAAPPLV). Over 174–202 (GWSRYIPEGMQCSCGIDYYTLKPEVNNES) the chain is Extracellular. Glutamate 201 is a binding site for Zn(2+). Residues 203–224 (FVIYMFVVHFTIPLIIIFFCYG) traverse the membrane as a helical segment. The Cytoplasmic segment spans residues 225-252 (QLVFTVKEAAAQQQESATTQKAEKEVTR). A helical membrane pass occupies residues 253–274 (MVIIMVIAFLICWVPYASVAFY). Residues 275–286 (IFTHQGSNFGPI) are Extracellular-facing. Glutamine 279 contacts Zn(2+). Residues 287 to 308 (FMTIPAFFAKSSSIYNPVIYIM) traverse the membrane as a helical segment. Residue lysine 296 is modified to N6-(retinylidene)lysine. Over 309–348 (MNKQFRNCMLTTICCGKNPLGDDEASATASKTETSQVAPA) the chain is Cytoplasmic. Residues cysteine 322 and cysteine 323 are each lipidated (S-palmitoyl cysteine). An interaction with SAG region spans residues 330–348 (DDEASATASKTETSQVAPA). Position 334 is a phosphoserine (serine 334). Threonine 336 is subject to Phosphothreonine. Position 338 is a phosphoserine (serine 338). Residues threonine 340 and threonine 342 each carry the phosphothreonine modification. At serine 343 the chain carries Phosphoserine.

Belongs to the G-protein coupled receptor 1 family. Opsin subfamily. In terms of assembly, homodimer. May form a complex composed of RHO, GRK1 and RCVRN in a Ca(2+)-dependent manner; RCVRN prevents the interaction between GRK1 and RHO. Interacts with GRK1. Interacts (phosphorylated form) with SAG. Interacts with GNAT1. Interacts with GNAT3. SAG and G-proteins compete for a common binding site. Interacts with PRCD; the interaction promotes PRCD stability. Forms a complex with ASAP1 and ARF4. Forms a complex with ASAP1, RAB11A, Rabin8/RAB3IP, ARF4 and RAB11FIP3; the complex regulates Golgi-to-cilia rhodopsin/RHO transport in photoreceptors. In terms of processing, phosphorylated on some or all of the serine and threonine residues present in the C-terminal region. Contains one covalently linked retinal chromophore. Upon light absorption, the covalently bound 11-cis-retinal is converted to all-trans-retinal. After hydrolysis of the Schiff base and release of the covalently bound all-trans-retinal, active rhodopsin is regenerated by binding of a fresh molecule of 11-cis-retinal.

It localises to the membrane. Its subcellular location is the cell projection. The protein resides in the cilium. The protein localises to the photoreceptor outer segment. In terms of biological role, photoreceptor required for image-forming vision at low light intensity. Required for photoreceptor cell viability after birth. Light-induced isomerization of 11-cis to all-trans retinal triggers a conformational change that activates signaling via G-proteins. Subsequent receptor phosphorylation mediates displacement of the bound G-protein alpha subunit by the arrestin SAG and terminates signaling. In Oryctolagus cuniculus (Rabbit), this protein is Rhodopsin (RHO).